Here is a 270-residue protein sequence, read N- to C-terminus: Small ribosomal subunit protein eS1 (270 aa).

Disordered stretches follow at residues 1–20 (MAVG…SKKK) and 238–270 (GGGK…QESV).

It belongs to the eukaryotic ribosomal protein eS1 family. Component of the small ribosomal subunit. Mature ribosomes consist of a small (40S) and a large (60S) subunit. The 40S subunit contains about 33 different proteins and 1 molecule of RNA (18S). The 60S subunit contains about 49 different proteins and 3 molecules of RNA (28S, 5.8S and 5S).

It is found in the cytoplasm. The protein is Small ribosomal subunit protein eS1 of Culex quinquefasciatus (Southern house mosquito).